Here is a 639-residue protein sequence, read N- to C-terminus: Threonine--tRNA ligase (639 aa).

The TGS domain occupies 1 to 61 (MIKVALKDGS…DTDCDLNLFK (61 aa)). A catalytic region spans residues 242–532 (DHRKLGKELG…LIEHYAGKFP (291 aa)). 3 residues coordinate Zn(2+): C333, H384, and H509.

This sequence belongs to the class-II aminoacyl-tRNA synthetase family. As to quaternary structure, homodimer. The cofactor is Zn(2+).

It localises to the cytoplasm. The catalysed reaction is tRNA(Thr) + L-threonine + ATP = L-threonyl-tRNA(Thr) + AMP + diphosphate + H(+). Its function is as follows. Catalyzes the attachment of threonine to tRNA(Thr) in a two-step reaction: L-threonine is first activated by ATP to form Thr-AMP and then transferred to the acceptor end of tRNA(Thr). Also edits incorrectly charged L-seryl-tRNA(Thr). This Clostridioides difficile (strain 630) (Peptoclostridium difficile) protein is Threonine--tRNA ligase.